A 310-amino-acid chain; its full sequence is Methionyl-tRNA formyltransferase (310 aa).

(6S)-5,6,7,8-tetrahydrofolate is bound at residue 109–112 (SLLP).

Belongs to the Fmt family.

The enzyme catalyses L-methionyl-tRNA(fMet) + (6R)-10-formyltetrahydrofolate = N-formyl-L-methionyl-tRNA(fMet) + (6S)-5,6,7,8-tetrahydrofolate + H(+). In terms of biological role, attaches a formyl group to the free amino group of methionyl-tRNA(fMet). The formyl group appears to play a dual role in the initiator identity of N-formylmethionyl-tRNA by promoting its recognition by IF2 and preventing the misappropriation of this tRNA by the elongation apparatus. In Pseudomonas putida (strain W619), this protein is Methionyl-tRNA formyltransferase.